The primary structure comprises 435 residues: Transmembrane protein 130 (435 aa).

Residues M1–A24 form the signal peptide. Topologically, residues G25–P339 are extracellular. Residues N34, N197, and N300 are each glycosylated (N-linked (GlcNAc...) asparagine). One can recognise a PKD domain in the interval W147 to S233. The helical transmembrane segment at A340–M360 threads the bilayer. Topologically, residues T361 to V435 are cytoplasmic.

Its subcellular location is the golgi apparatus membrane. The polypeptide is Transmembrane protein 130 (TMEM130) (Homo sapiens (Human)).